Here is a 288-residue protein sequence, read N- to C-terminus: Stage IV sporulation protein FB (288 aa).

Over 1-10 the chain is Mother cell cytoplasmic; that stretch reads MNKWLDLILK. The helical transmembrane segment at 11–30 threads the bilayer; it reads IHVHPFLWIIAALGLLTGHM. Residue lysine 31 is a topological domain, forespore intermembrane space. A helical transmembrane segment spans residues 32-56; sequence ALLCLLLIVLIHELGHAALAVFFSW. Histidine 43 is a Zn(2+) binding site. Residue glutamate 44 is part of the active site. A Zn(2+)-binding site is contributed by histidine 47. The Mother cell cytoplasmic portion of the chain corresponds to 57-83; sequence RIKRVFLLPFGGTVEVEEHGNRPLKEE. The chain crosses the membrane as a helical span at residues 84 to 105; that stretch reads FAVIIAGPLQHIWLQFAAWMLA. The Forespore intermembrane space segment spans residues 106–126; sequence EVSVIHQHTFELFTFYNLSIL. The helical transmembrane segment at 127–146 threads the bilayer; that stretch reads FVNLLPIWPLDGGKLLFLLF. Aspartate 137 provides a ligand contact to Zn(2+). Topologically, residues 147–161 are mother cell cytoplasmic; it reads SKQLPFQKAHRLNLK. A helical membrane pass occupies residues 162–178; that stretch reads TSLCFCLLLGCWVLFVI. Position 179 (proline 179) is a topological domain, forespore intermembrane space. Residues 180-199 traverse the membrane as a helical segment; that stretch reads LQISAWVLFVFLAVSLFEEY. At 200-288 the chain is on the mother cell cytoplasmic side; the sequence is RQRHYIHVRF…SSMEELLLPY (89 aa).

This sequence belongs to the peptidase M50B family. As to quaternary structure, forms a complex with SpoIVFA and BofA localized in the mother-cell membrane surrounding the forespore. Zn(2+) serves as cofactor.

The protein localises to the forespore outer membrane. In terms of biological role, implicated in the coupling of mother cell to forespore gene expression. Required for spore formation. Processes the pro-sigma K factor. In Bacillus subtilis (strain 168), this protein is Stage IV sporulation protein FB (spoIVFB).